The primary structure comprises 581 residues: Tricyclene synthase Oc15, chloroplastic (581 aa).

Residues 1 to 68 (MAFCISYVGA…ALCLNEHSLS (68 aa)) constitute a chloroplast transit peptide. Asn-27, Asn-206, and Asn-319 each carry an N-linked (GlcNAc...) asparagine glycan. Asp-338 and Asp-342 together coordinate Mg(2+). The DDXXD motif motif lies at 338-342 (DDIFD). Residues Asn-384 and Asn-465 are each glycosylated (N-linked (GlcNAc...) asparagine). The Mg(2+) site is built by Asn-482, Ser-486, and Glu-490. Asn-509 carries N-linked (GlcNAc...) asparagine glycosylation.

Belongs to the terpene synthase family. Tpsg subfamily. It depends on Mg(2+) as a cofactor. Requires Mn(2+) as cofactor. As to expression, accumulates in flowers; mostly expressed in both upper and lower petal lobes, and, to a lower extent, in tube and stamens.

The protein localises to the plastid. The protein resides in the chloroplast stroma. The enzyme catalyses (2E)-geranyl diphosphate = tricyclene + diphosphate. The catalysed reaction is (2E)-geranyl diphosphate = beta-myrcene + diphosphate. The protein operates within secondary metabolite biosynthesis; terpenoid biosynthesis. Functionally, contributes to floral scent emission. The protein is Tricyclene synthase Oc15, chloroplastic (Oc15) of Antirrhinum majus (Garden snapdragon).